The chain runs to 81 residues: Putative defensin-like protein 25 (81 aa).

The N-terminal stretch at 1–23 (MASLKVFSFALILVLTFSVDVEG) is a signal peptide. Cystine bridges form between cysteine 33–cysteine 81, cysteine 43–cysteine 68, cysteine 52–cysteine 77, and cysteine 56–cysteine 79.

Belongs to the DEFL family.

Its subcellular location is the secreted. The protein is Putative defensin-like protein 25 of Arabidopsis thaliana (Mouse-ear cress).